A 141-amino-acid chain; its full sequence is uncharacterized protein (141 aa).

Belongs to the PhzA/PhzB family.

This is an uncharacterized protein from Pseudomonas aeruginosa (strain ATCC 15692 / DSM 22644 / CIP 104116 / JCM 14847 / LMG 12228 / 1C / PRS 101 / PAO1).